The chain runs to 576 residues: Mitogen-activated protein kinase 15 (576 aa).

Residues 20–50 form a disordered region; that stretch reads RPSSSSSSNNHDQIQNPPTVSNPNDDEDLKK. A compositionally biased stretch (polar residues) spans 28–42; sequence NNHDQIQNPPTVSNP. The 292-residue stretch at 90–381 folds into the Protein kinase domain; sequence YQIQEVVGKG…AEEALADPYF (292 aa). ATP is bound by residues 96–104 and Lys119; that span reads VGKGSYGVV. Catalysis depends on Asp216, which acts as the Proton acceptor. Thr252 carries the post-translational modification Phosphothreonine. The TXY signature appears at 252-254; it reads TDY. Tyr254 is modified (phosphotyrosine). Thr257 is modified (phosphothreonine). Residues 458-535 are disordered; that stretch reads EENQGPGGRS…GGGYSARNLM (78 aa). Positions 477–501 are enriched in basic and acidic residues; the sequence is LPRERVPASKNETVEERSNDIERRT. The segment covering 504-520 has biased composition (polar residues); sequence AVASTLDSPKASQQAEG.

This sequence belongs to the protein kinase superfamily. CMGC Ser/Thr protein kinase family. MAP kinase subfamily. In terms of assembly, interacts with MKK7. Post-translationally, dually phosphorylated on Thr-252 and Tyr-254, which activates the enzyme.

The catalysed reaction is L-seryl-[protein] + ATP = O-phospho-L-seryl-[protein] + ADP + H(+). It carries out the reaction L-threonyl-[protein] + ATP = O-phospho-L-threonyl-[protein] + ADP + H(+). Its activity is regulated as follows. Activated by threonine and tyrosine phosphorylation. The protein is Mitogen-activated protein kinase 15 (MPK15) of Arabidopsis thaliana (Mouse-ear cress).